The primary structure comprises 178 residues: Putative metal-dependent hydrolase GK0616 (178 aa).

Residues His68, His161, and His165 each contribute to the Zn(2+) site.

Belongs to the metal hydrolase YfiT family. As to quaternary structure, homodimer. Zn(2+) is required as a cofactor.

It localises to the cytoplasm. Functionally, possible metal-dependent hydrolase. The polypeptide is Putative metal-dependent hydrolase GK0616 (Geobacillus kaustophilus (strain HTA426)).